Reading from the N-terminus, the 373-residue chain is Glutamate 5-kinase (373 aa).

ATP is bound at residue lysine 15. Substrate is bound by residues serine 56, aspartate 143, and asparagine 155. Residue 175 to 176 (SD) participates in ATP binding. In terms of domain architecture, PUA spans 281–358 (KGTLTIDAGA…PDVMTILGIS (78 aa)).

The protein belongs to the glutamate 5-kinase family.

The protein resides in the cytoplasm. It carries out the reaction L-glutamate + ATP = L-glutamyl 5-phosphate + ADP. It participates in amino-acid biosynthesis; L-proline biosynthesis; L-glutamate 5-semialdehyde from L-glutamate: step 1/2. Functionally, catalyzes the transfer of a phosphate group to glutamate to form L-glutamate 5-phosphate. This is Glutamate 5-kinase from Bradyrhizobium diazoefficiens (strain JCM 10833 / BCRC 13528 / IAM 13628 / NBRC 14792 / USDA 110).